The sequence spans 464 residues: Asparagine--tRNA ligase (464 aa).

Belongs to the class-II aminoacyl-tRNA synthetase family. As to quaternary structure, homodimer.

Its subcellular location is the cytoplasm. The enzyme catalyses tRNA(Asn) + L-asparagine + ATP = L-asparaginyl-tRNA(Asn) + AMP + diphosphate + H(+). The sequence is that of Asparagine--tRNA ligase from Xanthomonas campestris pv. campestris (strain 8004).